The chain runs to 566 residues: Phosphatidylinositol 3,4,5-trisphosphate 3-phosphatase TPTE2 (566 aa).

4 helical membrane passes run 135–155, 173–193, 208–228, and 234–254; these read SFAFGIFGVFLVLLDVTLLLA, ISLAIALFFLMDVLLRVFVEG, AIIVTPLLVDVVYIFFDIKFL, and WIHLVRLLRLIILIRIFHLIH. The Phosphatase tensin-type domain occupies 272-448; that stretch reads RRYTRDGFDL…GYFAQVKHLY (177 aa). Catalysis depends on Cys382, which acts as the Phosphocysteine intermediate. Residues 455-566 form the C2 tensin-type domain; sequence RRILFIKRFI…ILHSFRLVFT (112 aa).

The protein localises to the endoplasmic reticulum membrane. It is found in the golgi apparatus membrane. The enzyme catalyses a 1,2-diacyl-sn-glycero-3-phospho-(1D-myo-inositol-3,4,5-trisphosphate) + H2O = a 1,2-diacyl-sn-glycero-3-phospho-(1D-myo-inositol-4,5-bisphosphate) + phosphate. Functionally, acts as a lipid phosphatase, removing the phosphate in the D3 position of the inositol ring from phosphatidylinositol 3,4,5-trisphosphate. This is Phosphatidylinositol 3,4,5-trisphosphate 3-phosphatase TPTE2 (TPTE2) from Macaca fascicularis (Crab-eating macaque).